A 1058-amino-acid polypeptide reads, in one-letter code: Ubiquitin-like modifier-activating enzyme 1 Y (1058 aa).

The disordered stretch occupies residues 1 to 22 (MSSSVLSKKRKVSGPDSSLDSS). Residues Ala477, Asp503, Arg514, Lys527, and 575-576 (DN) contribute to the ATP site. Cys631 functions as the Glycyl thioester intermediate in the catalytic mechanism.

It belongs to the ubiquitin-activating E1 family. As to quaternary structure, monomer. As to expression, expressed in testis in A spermatogonia and spermatids but not (or at very low levels) in pachytene spermatocytes. Also expressed in Y-bearing ovaries and at very low levels in adrenal gland.

The catalysed reaction is ATP + ubiquitin + [E1 ubiquitin-activating enzyme]-L-cysteine = AMP + diphosphate + S-ubiquitinyl-[E1 ubiquitin-activating enzyme]-L-cysteine.. Its pathway is protein modification; protein ubiquitination. Activates ubiquitin by first adenylating its C-terminal glycine residue with ATP, and thereafter linking this residue to the side chain of a cysteine residue in E1, yielding a ubiquitin-E1 thioester and free AMP. The Y chromosome form could be involved in the survival and proliferation of differentiating spermatogonia. This is Ubiquitin-like modifier-activating enzyme 1 Y (Uba1y) from Mus musculus (Mouse).